The primary structure comprises 176 residues: NAD(P)H-quinone oxidoreductase subunit J (176 aa).

The protein belongs to the complex I 30 kDa subunit family. In terms of assembly, NDH-1 can be composed of about 15 different subunits; different subcomplexes with different compositions have been identified which probably have different functions.

The protein resides in the cell inner membrane. The catalysed reaction is a plastoquinone + NADH + (n+1) H(+)(in) = a plastoquinol + NAD(+) + n H(+)(out). It catalyses the reaction a plastoquinone + NADPH + (n+1) H(+)(in) = a plastoquinol + NADP(+) + n H(+)(out). Functionally, NDH-1 shuttles electrons from an unknown electron donor, via FMN and iron-sulfur (Fe-S) centers, to quinones in the respiratory and/or the photosynthetic chain. The immediate electron acceptor for the enzyme in this species is believed to be plastoquinone. Couples the redox reaction to proton translocation, and thus conserves the redox energy in a proton gradient. Cyanobacterial NDH-1 also plays a role in inorganic carbon-concentration. The polypeptide is NAD(P)H-quinone oxidoreductase subunit J (Gloeobacter violaceus (strain ATCC 29082 / PCC 7421)).